A 158-amino-acid chain; its full sequence is Phosphopantetheine adenylyltransferase (158 aa).

Thr10 contributes to the substrate binding site. ATP-binding positions include 10 to 11 and His18; that span reads TF. Residues Lys42, Leu74, and Arg88 each coordinate substrate. Residues 89–91, Glu99, and 124–130 contribute to the ATP site; these read GIR and WRYLSST.

Belongs to the bacterial CoaD family. In terms of assembly, homohexamer. It depends on Mg(2+) as a cofactor.

Its subcellular location is the cytoplasm. The enzyme catalyses (R)-4'-phosphopantetheine + ATP + H(+) = 3'-dephospho-CoA + diphosphate. It functions in the pathway cofactor biosynthesis; coenzyme A biosynthesis; CoA from (R)-pantothenate: step 4/5. In terms of biological role, reversibly transfers an adenylyl group from ATP to 4'-phosphopantetheine, yielding dephospho-CoA (dPCoA) and pyrophosphate. In Actinobacillus pleuropneumoniae serotype 7 (strain AP76), this protein is Phosphopantetheine adenylyltransferase.